The following is a 484-amino-acid chain: MPGTPVSDLSAATAVDATALLPLPVARPSAPAMVRGKLYIKTHGCQMNEYDSAKMADVLAASEGLELTDDPEEADVVLVNTCSIREKAQEKVFSQLGRWKALKAGGKPVIIGVGGCVASQEGEAIVKRAPYVDLVFGPQTLHRLPELIRARRESGKSQVDISFPEIEKFDRLPEPRAEGPSAFVSIMEGCSKYCSFCVVPYTRGEEVSRPFEDVLVEVAQLAAQGVREINLLGQNVNAYRGAYGADAGDAAQYADLGLLIRTIAQIEGIGRIRFTTSHPLEFSDSLVDAYRDVPQLANYLHLPVQAGSDRILSAMKRGYTALEFKSKIRKLRAVRPDISISSDFIVGFPGETEADFEKTMKLIEDVGFDQSFSFVYSRRPGTPASDLQDDTPEAVKQARLARLQAHINAHAASISQSMVGSVQRVLVEGPSRRDPNELTGKSENMRPVNFPGNPRLIGQFVDVLITEAMSNSLRGRIQLDDSAH.

The MTTase N-terminal domain occupies 36–153; the sequence is GKLYIKTHGC…LPELIRARRE (118 aa). [4Fe-4S] cluster is bound by residues C45, C82, C116, C190, C194, and C197. Positions 176–415 constitute a Radical SAM core domain; sequence RAEGPSAFVS…HINAHAASIS (240 aa). The region spanning 416 to 479 is the TRAM domain; the sequence is QSMVGSVQRV…SNSLRGRIQL (64 aa). A disordered region spans residues 428 to 450; it reads EGPSRRDPNELTGKSENMRPVNF.

Belongs to the methylthiotransferase family. MiaB subfamily. In terms of assembly, monomer. [4Fe-4S] cluster serves as cofactor.

Its subcellular location is the cytoplasm. The catalysed reaction is N(6)-dimethylallyladenosine(37) in tRNA + (sulfur carrier)-SH + AH2 + 2 S-adenosyl-L-methionine = 2-methylsulfanyl-N(6)-dimethylallyladenosine(37) in tRNA + (sulfur carrier)-H + 5'-deoxyadenosine + L-methionine + A + S-adenosyl-L-homocysteine + 2 H(+). Functionally, catalyzes the methylthiolation of N6-(dimethylallyl)adenosine (i(6)A), leading to the formation of 2-methylthio-N6-(dimethylallyl)adenosine (ms(2)i(6)A) at position 37 in tRNAs that read codons beginning with uridine. The polypeptide is tRNA-2-methylthio-N(6)-dimethylallyladenosine synthase (Xanthomonas axonopodis pv. citri (strain 306)).